Here is a 68-residue protein sequence, read N- to C-terminus: Large ribosomal subunit protein bL31 (68 aa).

Zn(2+) contacts are provided by C16, C18, C37, and C40.

It belongs to the bacterial ribosomal protein bL31 family. Type A subfamily. As to quaternary structure, part of the 50S ribosomal subunit. It depends on Zn(2+) as a cofactor.

Binds the 23S rRNA. In Aquifex aeolicus (strain VF5), this protein is Large ribosomal subunit protein bL31.